We begin with the raw amino-acid sequence, 146 residues long: Transcription antitermination protein NusB (146 aa).

The protein belongs to the NusB family.

Functionally, involved in transcription antitermination. Required for transcription of ribosomal RNA (rRNA) genes. Binds specifically to the boxA antiterminator sequence of the ribosomal RNA (rrn) operons. The chain is Transcription antitermination protein NusB from Koribacter versatilis (strain Ellin345).